Consider the following 515-residue polypeptide: uncharacterized protein (515 aa).

This sequence belongs to the AllF family.

This is an uncharacterized protein from Escherichia coli (strain K12).